The primary structure comprises 143 residues: Large ribosomal subunit protein uL13 (143 aa).

The protein belongs to the universal ribosomal protein uL13 family. As to quaternary structure, part of the 50S ribosomal subunit.

This protein is one of the early assembly proteins of the 50S ribosomal subunit, although it is not seen to bind rRNA by itself. It is important during the early stages of 50S assembly. The protein is Large ribosomal subunit protein uL13 of Clostridioides difficile (strain 630) (Peptoclostridium difficile).